The chain runs to 238 residues: Sugar fermentation stimulation protein homolog (238 aa).

Belongs to the SfsA family.

The sequence is that of Sugar fermentation stimulation protein homolog from Actinobacillus succinogenes (strain ATCC 55618 / DSM 22257 / CCUG 43843 / 130Z).